The sequence spans 69 residues: DNA-directed RNA polymerase subunit epsilon (69 aa).

The protein belongs to the RNA polymerase subunit epsilon family. As to quaternary structure, RNAP is composed of a core of 2 alpha, a beta and a beta' subunit. The core is associated with a delta subunit, and at least one of epsilon or omega. When a sigma factor is associated with the core the holoenzyme is formed, which can initiate transcription.

It catalyses the reaction RNA(n) + a ribonucleoside 5'-triphosphate = RNA(n+1) + diphosphate. Its function is as follows. A non-essential component of RNA polymerase (RNAP). The sequence is that of DNA-directed RNA polymerase subunit epsilon from Bacillus velezensis (strain DSM 23117 / BGSC 10A6 / LMG 26770 / FZB42) (Bacillus amyloliquefaciens subsp. plantarum).